The primary structure comprises 172 residues: MKRDKKEQIVQDVAEKIDRSQGIYLTEFQGLSVAKMAELRNEFRKAGVEYRVVKNTLIKKALRDLSSADRLASGLKSTTAVAFGYDDPLAPAKIIRKFSKTNEALKFKMASIDGVVYDADSLPALSEMLSKTENIGRAAGLINGVVSSVPMVVNAVARNLVSVLDQIAKQKQ.

This sequence belongs to the universal ribosomal protein uL10 family. Part of the ribosomal stalk of the 50S ribosomal subunit. The N-terminus interacts with L11 and the large rRNA to form the base of the stalk. The C-terminus forms an elongated spine to which L12 dimers bind in a sequential fashion forming a multimeric L10(L12)X complex.

In terms of biological role, forms part of the ribosomal stalk, playing a central role in the interaction of the ribosome with GTP-bound translation factors. The polypeptide is Large ribosomal subunit protein uL10 (Chlorobium phaeobacteroides (strain DSM 266 / SMG 266 / 2430)).